The primary structure comprises 452 residues: UDP-N-acetylmuramoylalanine--D-glutamate ligase (452 aa).

An ATP-binding site is contributed by 115 to 121 (GTNGKTT).

The protein belongs to the MurCDEF family.

It localises to the cytoplasm. It carries out the reaction UDP-N-acetyl-alpha-D-muramoyl-L-alanine + D-glutamate + ATP = UDP-N-acetyl-alpha-D-muramoyl-L-alanyl-D-glutamate + ADP + phosphate + H(+). Its pathway is cell wall biogenesis; peptidoglycan biosynthesis. Its function is as follows. Cell wall formation. Catalyzes the addition of glutamate to the nucleotide precursor UDP-N-acetylmuramoyl-L-alanine (UMA). The protein is UDP-N-acetylmuramoylalanine--D-glutamate ligase of Citrifermentans bemidjiense (strain ATCC BAA-1014 / DSM 16622 / JCM 12645 / Bem) (Geobacter bemidjiensis).